We begin with the raw amino-acid sequence, 221 residues long: ATP-dependent dethiobiotin synthetase BioD (221 aa).

Residue 11–16 coordinates ATP; the sequence is DVGKTF. Residue T15 coordinates Mg(2+). Residue K35 is part of the active site. Substrate is bound at residue T39. ATP contacts are provided by residues D44 and 103-106; that span reads EGAG. Mg(2+)-binding residues include D44 and E103.

It belongs to the dethiobiotin synthetase family. Homodimer. It depends on Mg(2+) as a cofactor.

It is found in the cytoplasm. It catalyses the reaction (7R,8S)-7,8-diammoniononanoate + CO2 + ATP = (4R,5S)-dethiobiotin + ADP + phosphate + 3 H(+). Its pathway is cofactor biosynthesis; biotin biosynthesis; biotin from 7,8-diaminononanoate: step 1/2. Catalyzes a mechanistically unusual reaction, the ATP-dependent insertion of CO2 between the N7 and N8 nitrogen atoms of 7,8-diaminopelargonic acid (DAPA, also called 7,8-diammoniononanoate) to form a ureido ring. This Leptospira interrogans serogroup Icterohaemorrhagiae serovar copenhageni (strain Fiocruz L1-130) protein is ATP-dependent dethiobiotin synthetase BioD.